The following is a 545-amino-acid chain: Hydroxylamine reductase (545 aa).

The [4Fe-4S] cluster site is built by Cys-7, Cys-10, Cys-19, and Cys-25. Residues His-241, Glu-265, Cys-309, Cys-400, Cys-428, Cys-453, Glu-488, and Lys-490 each coordinate hybrid [4Fe-2O-2S] cluster. Residue Cys-400 is modified to Cysteine persulfide; in oxidized form.

Belongs to the HCP family. Monomer. It depends on [4Fe-4S] cluster as a cofactor. Requires hybrid [4Fe-2O-2S] cluster as cofactor.

It is found in the cytoplasm. The catalysed reaction is A + NH4(+) + H2O = hydroxylamine + AH2 + H(+). Catalyzes the reduction of hydroxylamine to form NH(3) and H(2)O. This is Hydroxylamine reductase from Desulfovibrio desulfuricans (strain ATCC 27774 / DSM 6949 / MB).